The chain runs to 350 residues: Arabinogalactan endo-beta-1,4-galactanase A (350 aa).

Residues 1-16 (MIYPLLLSALPLLSSA) form the signal peptide. N-linked (GlcNAc...) asparagine glycosylation is present at N128. The Proton donor role is filled by E152. Residue E262 is the Nucleophile of the active site.

Belongs to the glycosyl hydrolase 53 family.

It is found in the secreted. It catalyses the reaction The enzyme specifically hydrolyzes (1-&gt;4)-beta-D-galactosidic linkages in type I arabinogalactans.. In terms of biological role, endogalactanase involved in the degradation of plant cell wall polysaccharides, and more particularly of hairy regions of pectin. This chain is Arabinogalactan endo-beta-1,4-galactanase A (galA), found in Aspergillus niger.